The primary structure comprises 158 residues: Serine-protein kinase RsbW (158 aa).

It belongs to the anti-sigma-factor family.

It carries out the reaction L-seryl-[protein] + ATP = O-phospho-L-seryl-[protein] + ADP + H(+). It catalyses the reaction L-threonyl-[protein] + ATP = O-phospho-L-threonyl-[protein] + ADP + H(+). In terms of biological role, negative regulator of sigma-B activity. Phosphorylates and inactivates its specific antagonist protein, RsbV. Upon phosphorylation of RsbV, RsbW is released and binds to sigma-B, thereby blocking its ability to form an RNA polymerase holoenzyme (E-sigma-B). The sequence is that of Serine-protein kinase RsbW from Oceanobacillus iheyensis (strain DSM 14371 / CIP 107618 / JCM 11309 / KCTC 3954 / HTE831).